The primary structure comprises 309 residues: Coenzyme PQQ synthesis protein B (309 aa).

Belongs to the PqqB family.

It functions in the pathway cofactor biosynthesis; pyrroloquinoline quinone biosynthesis. In terms of biological role, may be involved in the transport of PQQ or its precursor to the periplasm. The chain is Coenzyme PQQ synthesis protein B from Bradyrhizobium diazoefficiens (strain JCM 10833 / BCRC 13528 / IAM 13628 / NBRC 14792 / USDA 110).